We begin with the raw amino-acid sequence, 426 residues long: UPF0597 protein CLD_2825 (426 aa).

The protein belongs to the UPF0597 family.

This is UPF0597 protein CLD_2825 from Clostridium botulinum (strain Okra / Type B1).